A 453-amino-acid polypeptide reads, in one-letter code: GTPase Der (453 aa).

EngA-type G domains follow at residues 4 to 169 (PVVA…PPTD) and 178 to 353 (INVA…EQHR). Residues 10 to 17 (GRPNVGKS), 57 to 61 (DTGGL), 120 to 123 (NKCE), 184 to 191 (GRPNVGKS), 231 to 235 (DTAGI), and 296 to 299 (NKWD) contribute to the GTP site. Residues 354–439 (RRVSTSVINE…PIRLLWRGKK (86 aa)) form the KH-like domain.

This sequence belongs to the TRAFAC class TrmE-Era-EngA-EngB-Septin-like GTPase superfamily. EngA (Der) GTPase family. Associates with the 50S ribosomal subunit.

In terms of biological role, GTPase that plays an essential role in the late steps of ribosome biogenesis. The protein is GTPase Der of Cyanothece sp. (strain PCC 7425 / ATCC 29141).